A 548-amino-acid polypeptide reads, in one-letter code: MKNINPSQTAAWKALQQHFEQMKDVTISSLFAKDDQRFNRFSATFDDQMLVDFSKNRITSETLEKLQDLAKETDLAGAIKSMFSGEKINRTEDRAVLHIALRNRSNTPIVVDGKDVMPEVNAVLAKMKQFCDRVISGDWKGYTGKAITDVVNIGIGGSDLGPYMVTEALRPYKNHLNMHFVSNVDGTHIAEALKPLNPETTLFLVASKTFTTQETMTNAHSARDWFLSAAGDPAHVAKHFAALSTNAKAVGEFGIDTNNMFEFWDWVGGRYSLWSAIGLSIALSVGFEHFEQLLSGAHAMDKHFAETPAEKNLPVLLALIGIWYNNFFGAETEAILPYDQYMHRFPAYFQQGNMESNGKYVDRNGHPVDYQTGPIIWGEPGTNGQHAFYQLIHQGTKLIPCDFIAPAISHNPLSDHHAKLLSNFFAQTEALAFGKSLEDVEAEFAAAGKTPEQVAHVAPFKVFEGNRPTNSILLREITPFSLGALIALYEHKIFTQGVILNIYTFDQWGVELGKQLANRILPELADDQEVTSHDSSTNALINRFKNWR.

Residue Glu-355 is the Proton donor of the active site. Active-site residues include His-386 and Lys-514.

Belongs to the GPI family.

The protein resides in the cytoplasm. It carries out the reaction alpha-D-glucose 6-phosphate = beta-D-fructose 6-phosphate. The protein operates within carbohydrate biosynthesis; gluconeogenesis. It functions in the pathway carbohydrate degradation; glycolysis; D-glyceraldehyde 3-phosphate and glycerone phosphate from D-glucose: step 2/4. In terms of biological role, catalyzes the reversible isomerization of glucose-6-phosphate to fructose-6-phosphate. The sequence is that of Glucose-6-phosphate isomerase from Yersinia pestis (strain Pestoides F).